A 199-amino-acid polypeptide reads, in one-letter code: 7-methyl-GTP pyrophosphatase (199 aa).

The Proton acceptor role is filled by Asp74.

This sequence belongs to the Maf family. YceF subfamily. The cofactor is a divalent metal cation.

The protein localises to the cytoplasm. It carries out the reaction N(7)-methyl-GTP + H2O = N(7)-methyl-GMP + diphosphate + H(+). Its function is as follows. Nucleoside triphosphate pyrophosphatase that hydrolyzes 7-methyl-GTP (m(7)GTP). May have a dual role in cell division arrest and in preventing the incorporation of modified nucleotides into cellular nucleic acids. This Cupriavidus metallidurans (strain ATCC 43123 / DSM 2839 / NBRC 102507 / CH34) (Ralstonia metallidurans) protein is 7-methyl-GTP pyrophosphatase.